The primary structure comprises 544 residues: Chaperonin GroEL (544 aa).

Residues 30-33, lysine 51, 87-91, glycine 415, and aspartate 495 each bind ATP; these read TLGP and DGTTT.

This sequence belongs to the chaperonin (HSP60) family. As to quaternary structure, forms a cylinder of 14 subunits composed of two heptameric rings stacked back-to-back. Interacts with the co-chaperonin GroES.

It localises to the cytoplasm. It carries out the reaction ATP + H2O + a folded polypeptide = ADP + phosphate + an unfolded polypeptide.. Functionally, together with its co-chaperonin GroES, plays an essential role in assisting protein folding. The GroEL-GroES system forms a nano-cage that allows encapsulation of the non-native substrate proteins and provides a physical environment optimized to promote and accelerate protein folding. The sequence is that of Chaperonin GroEL from Methylobacillus flagellatus (strain ATCC 51484 / DSM 6875 / VKM B-1610 / KT).